Consider the following 85-residue polypeptide: CRISPR-associated endoribonuclease Cas2 2 (85 aa).

Residue D8 participates in Mg(2+) binding.

The protein belongs to the CRISPR-associated endoribonuclease Cas2 protein family. Homodimer, forms a heterotetramer with a Cas1 homodimer. Mg(2+) is required as a cofactor.

In terms of biological role, CRISPR (clustered regularly interspaced short palindromic repeat), is an adaptive immune system that provides protection against mobile genetic elements (viruses, transposable elements and conjugative plasmids). CRISPR clusters contain sequences complementary to antecedent mobile elements and target invading nucleic acids. CRISPR clusters are transcribed and processed into CRISPR RNA (crRNA). Functions as a ssRNA-specific endoribonuclease. Involved in the integration of spacer DNA into the CRISPR cassette. The protein is CRISPR-associated endoribonuclease Cas2 2 of Chloroflexus aurantiacus (strain ATCC 29366 / DSM 635 / J-10-fl).